A 375-amino-acid polypeptide reads, in one-letter code: Erythronate-4-phosphate dehydrogenase (375 aa).

2 residues coordinate substrate: S45 and T66. 2 residues coordinate NAD(+): D146 and T175. The active site involves R208. D232 contributes to the NAD(+) binding site. The active site involves E237. The active-site Proton donor is H254. Residue G257 participates in NAD(+) binding. Residue Y258 participates in substrate binding.

Belongs to the D-isomer specific 2-hydroxyacid dehydrogenase family. PdxB subfamily. In terms of assembly, homodimer.

Its subcellular location is the cytoplasm. The enzyme catalyses 4-phospho-D-erythronate + NAD(+) = (R)-3-hydroxy-2-oxo-4-phosphooxybutanoate + NADH + H(+). The protein operates within cofactor biosynthesis; pyridoxine 5'-phosphate biosynthesis; pyridoxine 5'-phosphate from D-erythrose 4-phosphate: step 2/5. In terms of biological role, catalyzes the oxidation of erythronate-4-phosphate to 3-hydroxy-2-oxo-4-phosphonooxybutanoate. The polypeptide is Erythronate-4-phosphate dehydrogenase (Yersinia pseudotuberculosis serotype O:1b (strain IP 31758)).